The sequence spans 80 residues: Large ribosomal subunit protein bL28 (80 aa).

The interval 1-21 (MSRICQITRKKSMKGNSVAHS) is disordered.

It belongs to the bacterial ribosomal protein bL28 family.

This chain is Large ribosomal subunit protein bL28, found in Azobacteroides pseudotrichonymphae genomovar. CFP2.